Here is a 436-residue protein sequence, read N- to C-terminus: ABC transporter permease YtrF (436 aa).

Positions 1–31 (MRFKDQVHFIRRNMKKNRLRVFMTILATTMA) are cleaved as a signal peptide. The N-palmitoyl cysteine moiety is linked to residue C32. C32 is lipidated: S-diacylglycerol cysteine. A coiled-coil region spans residues 115-165 (NMNDELKANMELEKGRVAKSENEIVVGYDFAKRLLTKKESEEYNKKIEEAK). Helical transmembrane passes span 293–313 (FKIG…IGIF), 350–370 (YIGI…SYLV), and 396–416 (IPAS…VISG).

The protein belongs to the ABC-4 integral membrane protein family. The complex is composed of 2 ATP-binding proteins (YtrB and YtrE), 2 transmembrane proteins (YtrC and YtrD) and a solute-binding protein (YtrF).

The protein resides in the cell membrane. Part of the ABC transporter complex YtrBCDEF that plays a role in acetoin utilization during stationary phase and sporulation. This chain is ABC transporter permease YtrF (ytrF), found in Bacillus subtilis (strain 168).